Consider the following 68-residue polypeptide: ATP synthase F(0) complex subunit 8 (68 aa).

A helical membrane pass occupies residues 8-21; that stretch reads VWPTMITPMLLTLF. At Lys-54 the chain carries N6-acetyllysine; alternate. N6-succinyllysine; alternate is present on Lys-54. Residue Lys-57 is modified to N6-acetyllysine.

The protein belongs to the ATPase protein 8 family. Component of the ATP synthase complex composed at least of ATP5F1A/subunit alpha, ATP5F1B/subunit beta, ATP5MC1/subunit c (homooctomer), MT-ATP6/subunit a, MT-ATP8/subunit 8, ATP5ME/subunit e, ATP5MF/subunit f, ATP5MG/subunit g, ATP5MK/subunit k, ATP5MJ/subunit j, ATP5F1C/subunit gamma, ATP5F1D/subunit delta, ATP5F1E/subunit epsilon, ATP5PF/subunit F6, ATP5PB/subunit b, ATP5PD/subunit d, ATP5PO/subunit OSCP. ATP synthase complex consists of a soluble F(1) head domain (subunits alpha(3) and beta(3)) - the catalytic core - and a membrane F(0) domain - the membrane proton channel (subunits c, a, 8, e, f, g, k and j). These two domains are linked by a central stalk (subunits gamma, delta, and epsilon) rotating inside the F1 region and a stationary peripheral stalk (subunits F6, b, d, and OSCP). Interacts with PRICKLE3.

It is found in the mitochondrion membrane. Subunit 8, of the mitochondrial membrane ATP synthase complex (F(1)F(0) ATP synthase or Complex V) that produces ATP from ADP in the presence of a proton gradient across the membrane which is generated by electron transport complexes of the respiratory chain. ATP synthase complex consist of a soluble F(1) head domain - the catalytic core - and a membrane F(1) domain - the membrane proton channel. These two domains are linked by a central stalk rotating inside the F(1) region and a stationary peripheral stalk. During catalysis, ATP synthesis in the catalytic domain of F(1) is coupled via a rotary mechanism of the central stalk subunits to proton translocation. In vivo, can only synthesize ATP although its ATP hydrolase activity can be activated artificially in vitro. Part of the complex F(0) domain. In Homo sapiens (Human), this protein is ATP synthase F(0) complex subunit 8.